A 190-amino-acid polypeptide reads, in one-letter code: Protein FAM210B, mitochondrial (190 aa).

A mitochondrion-targeting transit peptide spans 1–58 (MAGLLTLLGPAGRVSTRLRPLAPWLLGTATSCAPPLWALALSHPVPDARLLRTARGDC). The span at 56–66 (GDCLSRQEPNR) shows a compositional bias: basic and acidic residues. The interval 56–81 (GDCLSRQEPNRTPEPGGSVTGTEKKL) is disordered. Residues 78–189 (EKKLSRTQQL…VGLFKPPATK (112 aa)) enclose the DUF1279 domain. 2 consecutive transmembrane segments (helical) span residues 97 to 117 (VGVS…YTVV) and 148 to 168 (FVVA…ITLV).

It belongs to the FAM210 family. As to expression, expressed in late erythroblast differentiation stages.

Its subcellular location is the mitochondrion. The protein resides in the mitochondrion outer membrane. Functionally, plays a role in erythroid differentiation. Involved in cell proliferation and tumor cell growth suppression. Involved in the metabolic reprogramming of cancer cells in a PDK4-dependent manner. The polypeptide is Protein FAM210B, mitochondrial (Mus musculus (Mouse)).